We begin with the raw amino-acid sequence, 275 residues long: Release factor glutamine methyltransferase (275 aa).

S-adenosyl-L-methionine-binding positions include 114-118 (GTGSG), Asp137, Trp165, and Asn180. Residue 180 to 183 (NPPY) coordinates substrate.

Belongs to the protein N5-glutamine methyltransferase family. PrmC subfamily.

It carries out the reaction L-glutaminyl-[peptide chain release factor] + S-adenosyl-L-methionine = N(5)-methyl-L-glutaminyl-[peptide chain release factor] + S-adenosyl-L-homocysteine + H(+). Methylates the class 1 translation termination release factors RF1/PrfA and RF2/PrfB on the glutamine residue of the universally conserved GGQ motif. The chain is Release factor glutamine methyltransferase from Xylella fastidiosa (strain Temecula1 / ATCC 700964).